Reading from the N-terminus, the 397-residue chain is Phosphoglycerate kinase (397 aa).

Substrate is bound by residues 26–28 (DLN), arginine 42, 65–68 (HLGR), arginine 119, and arginine 152. ATP-binding positions include lysine 203, glutamate 325, and 351 to 354 (GGDT).

This sequence belongs to the phosphoglycerate kinase family. In terms of assembly, monomer.

It localises to the cytoplasm. It carries out the reaction (2R)-3-phosphoglycerate + ATP = (2R)-3-phospho-glyceroyl phosphate + ADP. Its pathway is carbohydrate degradation; glycolysis; pyruvate from D-glyceraldehyde 3-phosphate: step 2/5. This Bordetella bronchiseptica (strain ATCC BAA-588 / NCTC 13252 / RB50) (Alcaligenes bronchisepticus) protein is Phosphoglycerate kinase.